A 183-amino-acid chain; its full sequence is Ubiquitin carboxyl-terminal hydrolase 17-like protein 23 (183 aa).

One can recognise a USP domain in the interval 80–183; it reads AGLQNMGNTC…KACLPGHKQV (104 aa).

The protein belongs to the peptidase C19 family. USP17 subfamily.

Its subcellular location is the nucleus. The protein localises to the endoplasmic reticulum. The polypeptide is Ubiquitin carboxyl-terminal hydrolase 17-like protein 23 (USP17L23) (Homo sapiens (Human)).